A 291-amino-acid polypeptide reads, in one-letter code: RPE-retinal G protein-coupled receptor (291 aa).

Topologically, residues 1–15 (MAESGTLPTGFGELE) are extracellular. Residues 16 to 36 (VLAVGTVLLVEALSGLSLNIL) traverse the membrane as a helical segment. Residues 37–52 (TILSFCKTPELRTPSH) are Cytoplasmic-facing. Residues 53 to 73 (LLVLSLALADSGISLNALVAA) traverse the membrane as a helical segment. The Extracellular portion of the chain corresponds to 74 to 91 (TSSLLRRWPYGSEGCQAH). Residues Cys88 and Cys162 are joined by a disulfide bond. A helical membrane pass occupies residues 92–112 (GFQGFVTALASICSSAAVAWG). Residues 113 to 130 (RYHHFCTRSRLDWNTAVS) are Cytoplasmic-facing. A helical transmembrane segment spans residues 131-151 (LVFFVWLSSAFWAALPLLGWG). At 152-175 (HYDYEPLGTCCTLDYSRGDRNFTS) the chain is on the extracellular side. An N-linked (GlcNAc...) asparagine glycan is attached at Asn172. Residues 176–196 (FLFTMAFFNFLLPLFITVVSY) traverse the membrane as a helical segment. Over 197–219 (RLMEQKLGKTSRPPVNTVLPART) the chain is Cytoplasmic. The helical transmembrane segment at 220 to 240 (LLLGWGPYALLYLYATIADAT) threads the bilayer. Topologically, residues 241–247 (SISPKLQ) are extracellular. A helical transmembrane segment spans residues 248-268 (MVPALIAKAVPTVNAMNYALG). Position 255 is an N6-(retinylidene)lysine (Lys255). The Cytoplasmic portion of the chain corresponds to 269–291 (SEMVHRGIWQCLSPQRREHSREQ).

Belongs to the G-protein coupled receptor 1 family. Opsin subfamily. Post-translationally, covalently binds all-trans- and 11-cis-retinal. Preferentially expressed at high levels in the retinal pigment epithelium (RPE) and Mueller cells of the neural retina.

The protein localises to the membrane. Its function is as follows. Receptor for all-trans- and 11-cis-retinal. Binds preferentially to the former and may catalyze the isomerization of the chromophore by a retinochrome-like mechanism. This chain is RPE-retinal G protein-coupled receptor (RGR), found in Bos taurus (Bovine).